We begin with the raw amino-acid sequence, 372 residues long: UDP-N-acetylenolpyruvoylglucosamine reductase (372 aa).

The region spanning 29–205 (VGPTARRLIT…LEVEFALDAS (177 aa)) is the FAD-binding PCMH-type domain. Residue R177 is part of the active site. Catalysis depends on S260, which acts as the Proton donor. Residue E364 is part of the active site.

Belongs to the MurB family. Requires FAD as cofactor.

The protein resides in the cytoplasm. It carries out the reaction UDP-N-acetyl-alpha-D-muramate + NADP(+) = UDP-N-acetyl-3-O-(1-carboxyvinyl)-alpha-D-glucosamine + NADPH + H(+). It participates in cell wall biogenesis; peptidoglycan biosynthesis. Its function is as follows. Cell wall formation. The polypeptide is UDP-N-acetylenolpyruvoylglucosamine reductase (Mycobacterium avium (strain 104)).